Reading from the N-terminus, the 1035-residue chain is Eukaryotic translation initiation factor 3 subunit A (1035 aa).

Residues 92–121 (LKKFIELAEKKVTEAQAKADEIQSSLESAA) adopt a coiled-coil conformation. Residues 339 to 523 (MTKAASFVLL…GVLTFDTDVF (185 aa)) form the PCI domain. Positions 606 to 910 (ERRVIIEKKK…LRAKRAGLSE (305 aa)) form a coiled coil. Basic and acidic residues-rich tracts occupy residues 619–632 (TDAL…EETR) and 809–901 (KAAE…EARL). Disordered regions lie at residues 619-649 (TDAL…QRLA) and 809-1035 (KAAE…QQNQ). 2 stretches are compositionally biased toward low complexity: residues 943 to 953 (KEAAGGAAPEA) and 988 to 1004 (PPSQ…QTPP).

It belongs to the eIF-3 subunit A family. As to quaternary structure, component of the eukaryotic translation initiation factor 3 (eIF-3) complex.

Its subcellular location is the cytoplasm. Its function is as follows. RNA-binding component of the eukaryotic translation initiation factor 3 (eIF-3) complex, which is involved in protein synthesis of a specialized repertoire of mRNAs and, together with other initiation factors, stimulates binding of mRNA and methionyl-tRNAi to the 40S ribosome. The eIF-3 complex specifically targets and initiates translation of a subset of mRNAs involved in cell proliferation. The polypeptide is Eukaryotic translation initiation factor 3 subunit A (tif32) (Emericella nidulans (strain FGSC A4 / ATCC 38163 / CBS 112.46 / NRRL 194 / M139) (Aspergillus nidulans)).